The primary structure comprises 35 residues: Conotoxin Cal6.1c (35 aa).

Residues 1–35 constitute a propeptide that is removed on maturation; the sequence is GLNRPSKRCLAGSAPCEFHKRSTCCSGHCIIWWCA. Disulfide bonds link C9–C25, C16–C29, and C24–C34.

This sequence belongs to the conotoxin O1 superfamily. In terms of tissue distribution, expressed by the venom duct.

It localises to the secreted. Probable neurotoxin with unknown target. Possibly targets ion channels. The polypeptide is Conotoxin Cal6.1c (Californiconus californicus (California cone)).